A 207-amino-acid polypeptide reads, in one-letter code: Ras-related protein Rab7 (207 aa).

GTP is bound by residues 15 to 22 (GDSSVGKT), 34 to 40 (SNQYKAT), 63 to 67 (DTAGQ), 125 to 128 (NKVD), and 156 to 157 (AK). The short motif at 37-45 (YKATIGADF) is the Effector region element. 2 S-geranylgeranyl cysteine lipidation sites follow: cysteine 205 and cysteine 207.

The protein belongs to the small GTPase superfamily. Rab family. In terms of tissue distribution, expressed in eye (at protein level).

It is found in the early endosome membrane. It localises to the late endosome membrane. The protein localises to the lysosome membrane. Its subcellular location is the cytoplasmic vesicle. The protein resides in the autophagosome membrane. It is found in the autolysosome membrane. It localises to the presynapse. The protein localises to the perikaryon. The enzyme catalyses GTP + H2O = GDP + phosphate + H(+). In terms of biological role, small GTPase which cycles between active GTP-bound and inactive GDP-bound states. In its active state, binds to a variety of effector proteins playing a key role in the regulation of endo-lysosomal trafficking. Involved in microtubule minus and plus end-directed endosomal migration and positioning, and endosome-lysosome transport through different protein-protein interaction cascades. Governs early-to-late endosomal to lysosomal maturation. Controls endocytic cargo sorting towards the late endosome facilitating its eventual endolysosomal-mediated degradation. Together with Rab2 involved in promoting fusion of autophagosomes and endosomes with lysosomes probably through recruitment of the HOPS tethering complex. Involved in biosynthetic transport to lysosomes. Involved in establishing morphogen concentration gradients, for example of the TGF-beta homolog dpp/decapentaplegic, during pattern formation and organogenesis. Together with the Mon1-Ccz1 complex, required for autolysosome formation in fat cells and autophagic degradation during starvation-induced basal and developmental autophagy. Together with Mon1, regulates levels of postsynaptic glutamate receptor GluRIIA in the neuromuscular junction (NMJ) presynapse. Required for autophagocytosis-dependent remodeling of myofibrils and transverse-tubules (T-tubules) during metamorphosis. Involved in intracellular trafficking of the carbohydrate transporter Tret1 in glial cells of the blood brain barrier, influencing its subcellular localization and protein levels. This is Ras-related protein Rab7 from Drosophila melanogaster (Fruit fly).